We begin with the raw amino-acid sequence, 91 residues long: Large ribosomal subunit protein eL43 (91 aa).

A C4-type zinc finger spans residues 38–59 (CNFCGKDSLKRKAAGIWECKAC).

It belongs to the eukaryotic ribosomal protein eL43 family.

The polypeptide is Large ribosomal subunit protein eL43 (Schistosoma mansoni (Blood fluke)).